A 66-amino-acid polypeptide reads, in one-letter code: Large ribosomal subunit protein bL33c (66 aa).

This sequence belongs to the bacterial ribosomal protein bL33 family.

Its subcellular location is the plastid. The protein resides in the chloroplast. This chain is Large ribosomal subunit protein bL33c, found in Lobularia maritima (Sweet alyssum).